The primary structure comprises 67 residues: ATP synthase F(0) complex subunit 8 (67 aa).

A helical membrane pass occupies residues 8–24; it reads TWFITIISSMITLFILF. Lys54 is modified (N6-acetyllysine; alternate). N6-succinyllysine; alternate is present on Lys54. Lys57 is subject to N6-acetyllysine.

The protein belongs to the ATPase protein 8 family. In terms of assembly, component of the ATP synthase complex composed at least of ATP5F1A/subunit alpha, ATP5F1B/subunit beta, ATP5MC1/subunit c (homooctomer), MT-ATP6/subunit a, MT-ATP8/subunit 8, ATP5ME/subunit e, ATP5MF/subunit f, ATP5MG/subunit g, ATP5MK/subunit k, ATP5MJ/subunit j, ATP5F1C/subunit gamma, ATP5F1D/subunit delta, ATP5F1E/subunit epsilon, ATP5PF/subunit F6, ATP5PB/subunit b, ATP5PD/subunit d, ATP5PO/subunit OSCP. ATP synthase complex consists of a soluble F(1) head domain (subunits alpha(3) and beta(3)) - the catalytic core - and a membrane F(0) domain - the membrane proton channel (subunits c, a, 8, e, f, g, k and j). These two domains are linked by a central stalk (subunits gamma, delta, and epsilon) rotating inside the F1 region and a stationary peripheral stalk (subunits F6, b, d, and OSCP). Interacts with PRICKLE3.

It localises to the mitochondrion membrane. Functionally, subunit 8, of the mitochondrial membrane ATP synthase complex (F(1)F(0) ATP synthase or Complex V) that produces ATP from ADP in the presence of a proton gradient across the membrane which is generated by electron transport complexes of the respiratory chain. ATP synthase complex consist of a soluble F(1) head domain - the catalytic core - and a membrane F(1) domain - the membrane proton channel. These two domains are linked by a central stalk rotating inside the F(1) region and a stationary peripheral stalk. During catalysis, ATP synthesis in the catalytic domain of F(1) is coupled via a rotary mechanism of the central stalk subunits to proton translocation. In vivo, can only synthesize ATP although its ATP hydrolase activity can be activated artificially in vitro. Part of the complex F(0) domain. This Mus musculus (Mouse) protein is ATP synthase F(0) complex subunit 8.